The sequence spans 456 residues: Bifunctional protein GlmU (456 aa).

The pyrophosphorylase stretch occupies residues 1 to 229 (MLNNAMSVVI…LSEVEGVNNR (229 aa)). Residues 11-14 (LAAG), K25, Q76, 81-82 (GT), 103-105 (YGD), G140, E154, N169, and N227 contribute to the UDP-N-acetyl-alpha-D-glucosamine site. D105 provides a ligand contact to Mg(2+). A Mg(2+)-binding site is contributed by N227. The segment at 230 to 250 (LQLSRLERVYQSEQAEKLLLA) is linker. Residues 251-456 (GVMLRDPARF…EGWRRPVKKK (206 aa)) are N-acetyltransferase. The UDP-N-acetyl-alpha-D-glucosamine site is built by R333 and K351. H363 (proton acceptor) is an active-site residue. The UDP-N-acetyl-alpha-D-glucosamine site is built by Y366 and N377. Acetyl-CoA contacts are provided by residues A380, 386-387 (NY), S405, A423, and R440.

This sequence in the N-terminal section; belongs to the N-acetylglucosamine-1-phosphate uridyltransferase family. It in the C-terminal section; belongs to the transferase hexapeptide repeat family. As to quaternary structure, homotrimer. The cofactor is Mg(2+).

It is found in the cytoplasm. The enzyme catalyses alpha-D-glucosamine 1-phosphate + acetyl-CoA = N-acetyl-alpha-D-glucosamine 1-phosphate + CoA + H(+). The catalysed reaction is N-acetyl-alpha-D-glucosamine 1-phosphate + UTP + H(+) = UDP-N-acetyl-alpha-D-glucosamine + diphosphate. It functions in the pathway nucleotide-sugar biosynthesis; UDP-N-acetyl-alpha-D-glucosamine biosynthesis; N-acetyl-alpha-D-glucosamine 1-phosphate from alpha-D-glucosamine 6-phosphate (route II): step 2/2. It participates in nucleotide-sugar biosynthesis; UDP-N-acetyl-alpha-D-glucosamine biosynthesis; UDP-N-acetyl-alpha-D-glucosamine from N-acetyl-alpha-D-glucosamine 1-phosphate: step 1/1. The protein operates within bacterial outer membrane biogenesis; LPS lipid A biosynthesis. Functionally, catalyzes the last two sequential reactions in the de novo biosynthetic pathway for UDP-N-acetylglucosamine (UDP-GlcNAc). The C-terminal domain catalyzes the transfer of acetyl group from acetyl coenzyme A to glucosamine-1-phosphate (GlcN-1-P) to produce N-acetylglucosamine-1-phosphate (GlcNAc-1-P), which is converted into UDP-GlcNAc by the transfer of uridine 5-monophosphate (from uridine 5-triphosphate), a reaction catalyzed by the N-terminal domain. The polypeptide is Bifunctional protein GlmU (Escherichia coli O139:H28 (strain E24377A / ETEC)).